A 454-amino-acid polypeptide reads, in one-letter code: MNIVILAAGMGKRMNSALPKVLHPVAGQPMLSHVLDTARTLSPSRLVVVVGHGAELVRKAVGADDVAFAEQAQQLGTGHAVMQALPLLDDSQPTLVLYGDVPLTSVDTLKGLVQAAGAERLGVLTVEMPDPTGYGRIVRDAAGNIVRIVEQKDASEDVRAIREINTGIIVCPTAHLRQWLATLRNDNSQGEYYLTDTIERAVNDGVEVVSAQPAALWETLGVNSKVQLAEIERIHQRNIAQRLLEAGVTLLDPARIDVRGELTCGRDVTIDVGCVFEGRVHLEDGVSVGAHCVVRNTTIGAGARIQPFCHFEDAKVGPDGRIGPYARLRPGTELGQDVHIGNFVEIKNSQIADHSKANHLAYVGDATVGQRVNIGAGTITCNYDGVNKHRTVLEDDVFIGSDTQLVAPVTVRRGATIGAGTTLTKEAPADKLTLSRAKQMTLDAWQRPVKQPKK.

The tract at residues 1–225 (MNIVILAAGM…LWETLGVNSK (225 aa)) is pyrophosphorylase. Residues 6 to 9 (LAAG), Lys20, Gln71, 76 to 77 (GT), 98 to 100 (YGD), Gly135, Glu150, Asn165, and Asn223 each bind UDP-N-acetyl-alpha-D-glucosamine. Residue Asp100 coordinates Mg(2+). Asn223 contacts Mg(2+). The interval 226 to 246 (VQLAEIERIHQRNIAQRLLEA) is linker. The N-acetyltransferase stretch occupies residues 247–454 (GVTLLDPARI…WQRPVKQPKK (208 aa)). Arg329 and Lys347 together coordinate UDP-N-acetyl-alpha-D-glucosamine. The active-site Proton acceptor is the His359. UDP-N-acetyl-alpha-D-glucosamine contacts are provided by Tyr362 and Asn373. Acetyl-CoA-binding positions include Ala376, 382 to 383 (NY), Ser401, Ala419, and Arg436.

It in the N-terminal section; belongs to the N-acetylglucosamine-1-phosphate uridyltransferase family. In the C-terminal section; belongs to the transferase hexapeptide repeat family. Homotrimer. Mg(2+) is required as a cofactor.

The protein resides in the cytoplasm. The enzyme catalyses alpha-D-glucosamine 1-phosphate + acetyl-CoA = N-acetyl-alpha-D-glucosamine 1-phosphate + CoA + H(+). It catalyses the reaction N-acetyl-alpha-D-glucosamine 1-phosphate + UTP + H(+) = UDP-N-acetyl-alpha-D-glucosamine + diphosphate. The protein operates within nucleotide-sugar biosynthesis; UDP-N-acetyl-alpha-D-glucosamine biosynthesis; N-acetyl-alpha-D-glucosamine 1-phosphate from alpha-D-glucosamine 6-phosphate (route II): step 2/2. It participates in nucleotide-sugar biosynthesis; UDP-N-acetyl-alpha-D-glucosamine biosynthesis; UDP-N-acetyl-alpha-D-glucosamine from N-acetyl-alpha-D-glucosamine 1-phosphate: step 1/1. It functions in the pathway bacterial outer membrane biogenesis; LPS lipid A biosynthesis. In terms of biological role, catalyzes the last two sequential reactions in the de novo biosynthetic pathway for UDP-N-acetylglucosamine (UDP-GlcNAc). The C-terminal domain catalyzes the transfer of acetyl group from acetyl coenzyme A to glucosamine-1-phosphate (GlcN-1-P) to produce N-acetylglucosamine-1-phosphate (GlcNAc-1-P), which is converted into UDP-GlcNAc by the transfer of uridine 5-monophosphate (from uridine 5-triphosphate), a reaction catalyzed by the N-terminal domain. This Cupriavidus metallidurans (strain ATCC 43123 / DSM 2839 / NBRC 102507 / CH34) (Ralstonia metallidurans) protein is Bifunctional protein GlmU.